The chain runs to 678 residues: Glycine--tRNA ligase beta subunit (678 aa).

Belongs to the class-II aminoacyl-tRNA synthetase family. Tetramer of two alpha and two beta subunits.

The protein resides in the cytoplasm. It catalyses the reaction tRNA(Gly) + glycine + ATP = glycyl-tRNA(Gly) + AMP + diphosphate. This is Glycine--tRNA ligase beta subunit from Streptococcus pneumoniae (strain 70585).